We begin with the raw amino-acid sequence, 433 residues long: 23S rRNA (uracil(1939)-C(5))-methyltransferase RlmD (433 aa).

The TRAM domain maps to 1–53 (MPTAVIESLDHEGRGIARVEGKAVFIEGGLPGETVEYRVLRSKPNYEQAEATR). Residues cysteine 66, cysteine 72, cysteine 75, and cysteine 154 each contribute to the [4Fe-4S] cluster site. S-adenosyl-L-methionine is bound by residues glutamine 263, phenylalanine 292, asparagine 297, glutamate 313, asparagine 341, and aspartate 362. The Nucleophile role is filled by cysteine 389.

Belongs to the class I-like SAM-binding methyltransferase superfamily. RNA M5U methyltransferase family. RlmD subfamily.

It catalyses the reaction uridine(1939) in 23S rRNA + S-adenosyl-L-methionine = 5-methyluridine(1939) in 23S rRNA + S-adenosyl-L-homocysteine + H(+). Functionally, catalyzes the formation of 5-methyl-uridine at position 1939 (m5U1939) in 23S rRNA. The polypeptide is 23S rRNA (uracil(1939)-C(5))-methyltransferase RlmD (Azoarcus sp. (strain BH72)).